We begin with the raw amino-acid sequence, 504 residues long: Deoxyguanosinetriphosphate triphosphohydrolase (504 aa).

One can recognise an HD domain in the interval 66 to 273 (RLTHSLEVQQ…MEAADDISYC (208 aa)).

Belongs to the dGTPase family. Type 1 subfamily. In terms of assembly, homotetramer. Mg(2+) serves as cofactor.

The enzyme catalyses dGTP + H2O = 2'-deoxyguanosine + triphosphate + H(+). In terms of biological role, dGTPase preferentially hydrolyzes dGTP over the other canonical NTPs. The polypeptide is Deoxyguanosinetriphosphate triphosphohydrolase (Cronobacter sakazakii (strain ATCC BAA-894) (Enterobacter sakazakii)).